Reading from the N-terminus, the 532-residue chain is BEL1-like homeodomain protein 6 (532 aa).

Residues 144–160 (SKYLKAAQQLLDEAVNV) form an SR/KY domain region. Residues 170–203 (EGDKNNENPQEPNQSTQDSSTNPPADISQSERQE) form a disordered region. Over residues 176–197 (ENPQEPNQSTQDSSTNPPADIS) the composition is skewed to polar residues. A BELL domain region spans residues 200 to 271 (ERQEMQSKLT…SLRDAISGQI (72 aa)). Positions 314–376 (AWRPQRGLPE…NARVRLWKPM (63 aa)) form a DNA-binding region, homeobox. Residues 385–434 (FTENDSNSSSENTPKMSEIGPVAADDEDRAREFSQDQTKPDHGHGYGEET) are disordered. The span at 412 to 434 (DRAREFSQDQTKPDHGHGYGEET) shows a compositional bias: basic and acidic residues.

This sequence belongs to the TALE/BELL homeobox family. In terms of assembly, may form heterodimeric complexes with TALE/KNOX proteins. Interacts with OFP2, OFP4, and OFP5.

The protein resides in the nucleus. This is BEL1-like homeodomain protein 6 (BLH6) from Arabidopsis thaliana (Mouse-ear cress).